The chain runs to 129 residues: Probable protein cornichon homolog 2 (129 aa).

The next 2 helical transmembrane spans lie at 45 to 65 (FIVQGVLCVFYLLTGHWFMTL) and 105 to 125 (LAYIVLNLFLTIFWMIYSALD).

This sequence belongs to the cornichon family.

It localises to the membrane. The sequence is that of Probable protein cornichon homolog 2 from Arabidopsis thaliana (Mouse-ear cress).